A 91-amino-acid chain; its full sequence is Large ribosomal subunit protein bL27 (91 aa).

Residues 1–21 (MAHKKAGGSSRNGRDSESKRL) are disordered.

This sequence belongs to the bacterial ribosomal protein bL27 family.

This chain is Large ribosomal subunit protein bL27, found in Azoarcus sp. (strain BH72).